A 201-amino-acid polypeptide reads, in one-letter code: 3-isopropylmalate dehydratase small subunit (201 aa).

It belongs to the LeuD family. LeuD type 1 subfamily. Heterodimer of LeuC and LeuD.

It catalyses the reaction (2R,3S)-3-isopropylmalate = (2S)-2-isopropylmalate. It functions in the pathway amino-acid biosynthesis; L-leucine biosynthesis; L-leucine from 3-methyl-2-oxobutanoate: step 2/4. In terms of biological role, catalyzes the isomerization between 2-isopropylmalate and 3-isopropylmalate, via the formation of 2-isopropylmaleate. This Escherichia coli O127:H6 (strain E2348/69 / EPEC) protein is 3-isopropylmalate dehydratase small subunit.